The following is an 839-amino-acid chain: Elongation factor 2 (839 aa).

A tr-type G domain is found at 17 to 248; the sequence is ENIRNMSVIA…MGRLWGDSYF (232 aa). GTP-binding positions include 26 to 33, 156 to 159, and 211 to 213; these read AHVDHGKT, NKVD, and SGL. Diphthamide is present on histidine 698.

Belongs to the TRAFAC class translation factor GTPase superfamily. Classic translation factor GTPase family. EF-G/EF-2 subfamily. In terms of processing, phosphorylation by EF-2 kinase completely inactivates EF-2.

It is found in the cytoplasm. The catalysed reaction is GTP + H2O = GDP + phosphate + H(+). Functionally, catalyzes the GTP-dependent ribosomal translocation step during translation elongation. During this step, the ribosome changes from the pre-translocational (PRE) to the post-translocational (POST) state as the newly formed A-site-bound peptidyl-tRNA and P-site-bound deacylated tRNA move to the P and E sites, respectively. Catalyzes the coordinated movement of the two tRNA molecules, the mRNA and conformational changes in the ribosome. This chain is Elongation factor 2 (efbA), found in Dictyostelium discoideum (Social amoeba).